The chain runs to 210 residues: MALELLTPFTKVELEEEKKESNRKQIGILGGNFNPIHNAHLVVADQVRQQLGLDQVLLMPECKPPHVDAKETIDEKHRLRMLELAIEDVEGLAIETCELERQGISYTYDTMLYLTEQHPDVDFYFIIGADMVDYLPKWHRIDELVKLVQFVGVQRPKYKAGTSYPVIWVDLPLMDISSSMIRDFIKKGRQPNYLLPKRVLDYITQEGLYQ.

Belongs to the NadD family.

The enzyme catalyses nicotinate beta-D-ribonucleotide + ATP + H(+) = deamido-NAD(+) + diphosphate. It functions in the pathway cofactor biosynthesis; NAD(+) biosynthesis; deamido-NAD(+) from nicotinate D-ribonucleotide: step 1/1. Catalyzes the reversible adenylation of nicotinate mononucleotide (NaMN) to nicotinic acid adenine dinucleotide (NaAD). In Streptococcus pyogenes serotype M3 (strain ATCC BAA-595 / MGAS315), this protein is Probable nicotinate-nucleotide adenylyltransferase.